Consider the following 630-residue polypeptide: MDPLRQPREEFVKVLGEVSRELGLPEVPEVERTRRYGFFSARFHKYKVDHSRLAEVVNLIKNKRFEFLSSLSVDGLYLNADLNVSKVAELVFEAVVKMGRKYGFTEECVTGSYLVEHTSANPVHPLHIGHGRNAILGDSLARLLKFCGNKVETHFYVDDCGVQVMYAAMGYNAVKDEVKKRIEKSKPDVVIGHVYSATNAVAEIGRLKKELEKAQDDERKREILREIDEWVAVLKRLMDSEGDIISKIAEELGRRDLLNEAVELNRRYESGDPEAKGVVREVVDLVLKGQRETLARLGVEIDKWDYESELTVWSSEAMRIVSELQKRWPQYIEIKGGAVVFRADKFVQDYNLWDVLDLPRFIPPVTLTRSDGTTLYVTRDVAYALWQARQGFDKVIRVISTEQTHEQAHVRIILYALGYVDEAKKIVHYAYEMVNLPGMKMSARRGQYISLDEILDEAAERSASLVKEKNPEVSGVIAERVGVGSVRYAFLTTSPRKPIEFKWDVVLNLRQNSGTFLQYTYVRAYSILEKAGEIGNVPVPENMLAEERELVLKIAEWPSVVKEAAKSLRPDYVAEYLDGLALVFNSYYEKAPVLKAEESVRGFRIAIVNAVKTVLEAGFYILGIPTLTKM.

Positions 120 to 130 match the 'HIGH' region motif; that stretch reads ANPVHPLHIGH.

The protein belongs to the class-I aminoacyl-tRNA synthetase family.

It is found in the cytoplasm. The catalysed reaction is tRNA(Arg) + L-arginine + ATP = L-arginyl-tRNA(Arg) + AMP + diphosphate. The polypeptide is Arginine--tRNA ligase (Pyrobaculum aerophilum (strain ATCC 51768 / DSM 7523 / JCM 9630 / CIP 104966 / NBRC 100827 / IM2)).